A 314-amino-acid polypeptide reads, in one-letter code: Polyadenylate-binding protein-interacting protein 8 (314 aa).

Positions 1-47 (MAAITEMATDSNDVINDGGTGDGIEKSTDSKPEIESDDLKPKSKPEY) are disordered. Residues 23–47 (GIEKSTDSKPEIESDDLKPKSKPEY) show a composition bias toward basic and acidic residues. The PAM2-like signature appears at 59–69 (KLNPEAKEFFP). Residues 99–112 (RRRRNNYNQGRRVR) carry the Bipartite nuclear localization signal motif. 2 consecutive RRM domains span residues 128–203 (RTVY…PSKT) and 225–301 (RTIY…PSKT).

Interacts with MPC. Expressed in cauline leaves, stems, rosette leaves, immature siliques and primary inflorescences but at a low level.

The protein resides in the nucleus. The sequence is that of Polyadenylate-binding protein-interacting protein 8 (CID8) from Arabidopsis thaliana (Mouse-ear cress).